A 315-amino-acid chain; its full sequence is 4-diphosphocytidyl-2-C-methyl-D-erythritol kinase (315 aa).

Residue Lys-26 is part of the active site. Position 111-121 (111-121) interacts with ATP; sequence PLAGGLAGGSA. The active site involves Asp-153.

It belongs to the GHMP kinase family. IspE subfamily.

It carries out the reaction 4-CDP-2-C-methyl-D-erythritol + ATP = 4-CDP-2-C-methyl-D-erythritol 2-phosphate + ADP + H(+). It participates in isoprenoid biosynthesis; isopentenyl diphosphate biosynthesis via DXP pathway; isopentenyl diphosphate from 1-deoxy-D-xylulose 5-phosphate: step 3/6. In terms of biological role, catalyzes the phosphorylation of the position 2 hydroxy group of 4-diphosphocytidyl-2C-methyl-D-erythritol. In Salinispora arenicola (strain CNS-205), this protein is 4-diphosphocytidyl-2-C-methyl-D-erythritol kinase.